A 462-amino-acid chain; its full sequence is MGPWTHSLRAVLLLVLLGVCTVRSDTPANCTYPDLLGTWVFQVGPRSSRSDINCSVMEATEEKVVVHLKKLDTAYDELGNSGHFTLIYNQGFEIVLNDYKWFAFFKYEVRGHTAISYCHETMTGWVHDVLGRNWACFVGKKVESHIEKVNMNAAHLGGLQERYSERLYTHNHNFVKAINTVQKSWTATAYKEYEKMSLRDLIRRSGHSQRIPRPKPAPMTDEIQQQILNLPESWDWRNVQGVNYVSPVRNQESCGSCYSFASMGMLEARIRILTNNSQTPILSPQEVVSCSPYAQGCDGGFPYLIAGKYAQDFGVVEESCFPYTAKDSPCKPRENCLRYYSSDYYYVGGFYGGCNEALMKLELVKHGPMAVAFEVHDDFLHYHSGIYHHTGLSDPFNPFELTNHAVLLVGYGRDPVTGIEYWIIKNSWGSNWGESGYFRIRRGTDECAIESIAVAAIPIPKL.

Positions 1–24 (MGPWTHSLRAVLLLVLLGVCTVRS) are cleaved as a signal peptide. N-linked (GlcNAc...) asparagine glycosylation is found at Asn-29 and Asn-53. 5 disulfide bridges follow: Cys-30–Cys-118, Cys-54–Cys-136, Cys-254–Cys-297, Cys-290–Cys-330, and Cys-320–Cys-336. The propeptide occupies 135-230 (ACFVGKKVES…DEIQQQILNL (96 aa)). Cys-257 is a catalytic residue. Residue Asn-275 is glycosylated (N-linked (GlcNAc...) asparagine). Residues Phe-301 and Tyr-303 each coordinate chloride. Position 346 (Tyr-346) interacts with chloride. Residues His-404 and Asn-426 contribute to the active site.

It belongs to the peptidase C1 family. Tetramer of heterotrimers consisting of exclusion domain, heavy- and light chains. Requires chloride as cofactor. Broadly distributed, but higher levels found in lung, liver, kidney and spleen. Lower levels found in testis and brain.

Its subcellular location is the lysosome. The catalysed reaction is Release of an N-terminal dipeptide, Xaa-Yaa-|-Zaa-, except when Xaa is Arg or Lys, or Yaa or Zaa is Pro.. Its function is as follows. Thiol protease. Has dipeptidylpeptidase activity. Active against a broad range of dipeptide substrates composed of both polar and hydrophobic amino acids. Proline cannot occupy the P1 position and arginine cannot occupy the P2 position of the substrate. Can act as both an exopeptidase and endopeptidase. Activates serine proteases such as elastase, cathepsin G and granzymes A and B. This chain is Dipeptidyl peptidase 1 (Ctsc), found in Mus musculus (Mouse).